A 324-amino-acid polypeptide reads, in one-letter code: Viral cathepsin (324 aa).

Positions 1 to 16 (MNKIVLYLLVYGAVQC) are cleaved as a signal peptide. Residues 17 to 113 (AAYDVLKAPN…VVLDRPPDKG (97 aa)) constitute a propeptide, activation peptide. 3 cysteine pairs are disulfide-bonded: Cys-134–Cys-175, Cys-168–Cys-208, and Cys-263–Cys-311. The active site involves Cys-137. Asn-159 carries N-linked (GlcNAc...) asparagine; by host glycosylation. Residues His-270 and Asn-290 contribute to the active site.

The protein belongs to the peptidase C1 family. In terms of processing, synthesized as an inactive proenzyme and activated by proteolytic removal of the inhibitory propeptide.

The enzyme catalyses Endopeptidase of broad specificity, hydrolyzing substrates of both cathepsin L and cathepsin B.. Functionally, cysteine protease that plays an essential role in host liquefaction to facilitate horizontal transmission of the virus. May participate in the degradation of foreign protein expressed by the baculovirus system. The chain is Viral cathepsin (Vcath) from Choristoneura fumiferana nuclear polyhedrosis virus (CfMNPV).